Reading from the N-terminus, the 304-residue chain is Protoheme IX farnesyltransferase 1 (304 aa).

Helical transmembrane passes span 24-44 (VVVLMLITSLIGMLLATKAPL), 47-67 (FVPWQVLIFGNLGIGLCAGAA), 99-119 (MALGFALLLALAGMAVLLAFT), 122-142 (LTAWLTLASLLGYAALYTGFL), 150-170 (IVIGGLAGAAPPLLGWVAITG), 176-196 (PLLLVLIIFAWTPPHFWALCI), 228-248 (LVLFAVSLMPFVIHMSGLVYL), and 280-300 (YSIVYLFLLFMALLVDHYLPL).

The protein belongs to the UbiA prenyltransferase family. Protoheme IX farnesyltransferase subfamily.

The protein localises to the cell inner membrane. It catalyses the reaction heme b + (2E,6E)-farnesyl diphosphate + H2O = Fe(II)-heme o + diphosphate. It functions in the pathway porphyrin-containing compound metabolism; heme O biosynthesis; heme O from protoheme: step 1/1. Converts heme B (protoheme IX) to heme O by substitution of the vinyl group on carbon 2 of heme B porphyrin ring with a hydroxyethyl farnesyl side group. The polypeptide is Protoheme IX farnesyltransferase 1 (Pseudomonas paraeruginosa (strain DSM 24068 / PA7) (Pseudomonas aeruginosa (strain PA7))).